A 177-amino-acid polypeptide reads, in one-letter code: uncharacterized protein (177 aa).

The next 4 helical transmembrane spans lie at 20–42 (NLVS…LLAL), 62–84 (VVLW…VSLS), 94–116 (AMSS…GYFI), and 136–158 (GLLY…IIVA).

The protein resides in the cell membrane. This is an uncharacterized protein from Methanocaldococcus jannaschii (strain ATCC 43067 / DSM 2661 / JAL-1 / JCM 10045 / NBRC 100440) (Methanococcus jannaschii).